The chain runs to 107 residues: Polyketide synthase CurG (107 aa).

Its pathway is antibiotic biosynthesis; curamycin biosynthesis. This Streptomyces cyaneus (Streptomyces curacoi) protein is Polyketide synthase CurG (curG).